The sequence spans 417 residues: Phosphoglycerate kinase (417 aa).

Positions 23, 24, 25, 26, 39, 40, 63, 64, 66, 67, 122, 123, 170, and 171 each coordinate (2R)-3-phosphoglycerate. G214 provides a ligand contact to ADP. G214 serves as a coordination point for CDP. Residues A215 and K216 each contribute to the AMP site. A215 lines the ATP pocket. A215 lines the Mg(2+) pocket. D219 contributes to the CDP binding site. D219 serves as a coordination point for Mg(2+). K220 contributes to the AMP binding site. K220 is a binding site for ATP. G238 contacts ADP. G238 is a binding site for CDP. Positions 239 and 313 each coordinate AMP. Positions 239 and 313 each coordinate ATP. Residues G338 and F343 each contribute to the CDP site. Residue F343 participates in ADP binding. AMP is bound at residue E344. Positions 344, 375, and 376 each coordinate ATP. D375 contacts Mg(2+).

It belongs to the phosphoglycerate kinase family. As to quaternary structure, monomer. Mg(2+) serves as cofactor.

The protein resides in the cytoplasm. The protein localises to the mitochondrion. It catalyses the reaction (2R)-3-phosphoglycerate + ATP = (2R)-3-phospho-glyceroyl phosphate + ADP. The protein operates within carbohydrate degradation; glycolysis; pyruvate from D-glyceraldehyde 3-phosphate: step 2/5. In terms of biological role, catalyzes one of the two ATP producing reactions in the glycolytic pathway via the reversible conversion of 1,3-diphosphoglycerate to 3-phosphoglycerate. Both L- and D- forms of purine and pyrimidine nucleotides can be used as substrates, but the activity is much lower on pyrimidines. Negatively regulates the biosynthesis of acetyl-CoA from pyruvate in the mitochondrion. The protein is Phosphoglycerate kinase (PGKA) of Penicillium citrinum.